A 127-amino-acid chain; its full sequence is Multifunctional methyltransferase subunit trm112 (127 aa).

In terms of domain architecture, TRM112 spans 2–123; sequence KVMTLNFLTC…KNGVANFLLP (122 aa).

This sequence belongs to the TRM112 family. Heterodimer of mtq2-rmt-1/trm112, forming the eRF1 methyltransferase. Rmt-1/trm112 is necessary for the solubility and activity of the catalytic subunit mtq2. Interacts with trm11; required for full tRNA methyltransferase activity. Interacts with bud23; required for full rRNA methyltransferase activity.

It is found in the cytoplasm. The protein resides in the nucleus. Acts as an activator of both rRNA/tRNA and protein methyltransferases. Together with methyltransferase mtq2, required for the methylation of eRF1 on 'Gln-182'. Together with methyltransferase trm11, required for the formation of 2-methylguanosine at position 10 (m2G10) in tRNA. Together with methyltransferase bud23, required for the formation of a 7-methylguanine in 18S rRNA. Involved in biogenesis of both 40S and 60S ribosomal subunits. The polypeptide is Multifunctional methyltransferase subunit trm112 (rmt-1) (Neurospora crassa (strain ATCC 24698 / 74-OR23-1A / CBS 708.71 / DSM 1257 / FGSC 987)).